The chain runs to 200 residues: 3-isopropylmalate dehydratase small subunit (200 aa).

It belongs to the LeuD family. LeuD type 1 subfamily. Heterodimer of LeuC and LeuD.

The catalysed reaction is (2R,3S)-3-isopropylmalate = (2S)-2-isopropylmalate. The protein operates within amino-acid biosynthesis; L-leucine biosynthesis; L-leucine from 3-methyl-2-oxobutanoate: step 2/4. Catalyzes the isomerization between 2-isopropylmalate and 3-isopropylmalate, via the formation of 2-isopropylmaleate. This Vibrio vulnificus (strain YJ016) protein is 3-isopropylmalate dehydratase small subunit.